The sequence spans 238 residues: Ribonuclease PH (238 aa).

The tract at residues Leu66 to Gln88 is disordered. Residues Arg86 and Gly124–Arg126 each bind phosphate.

The protein belongs to the RNase PH family. Homohexameric ring arranged as a trimer of dimers.

It carries out the reaction tRNA(n+1) + phosphate = tRNA(n) + a ribonucleoside 5'-diphosphate. Functionally, phosphorolytic 3'-5' exoribonuclease that plays an important role in tRNA 3'-end maturation. Removes nucleotide residues following the 3'-CCA terminus of tRNAs; can also add nucleotides to the ends of RNA molecules by using nucleoside diphosphates as substrates, but this may not be physiologically important. Probably plays a role in initiation of 16S rRNA degradation (leading to ribosome degradation) during starvation. This Ralstonia pickettii (strain 12J) protein is Ribonuclease PH.